We begin with the raw amino-acid sequence, 461 residues long: Phosphoglucosamine mutase (461 aa).

Residue S113 is the Phosphoserine intermediate of the active site. Residues S113, D251, D253, and D255 each contribute to the Mg(2+) site. At S113 the chain carries Phosphoserine.

It belongs to the phosphohexose mutase family. Mg(2+) is required as a cofactor. Post-translationally, activated by phosphorylation.

It carries out the reaction alpha-D-glucosamine 1-phosphate = D-glucosamine 6-phosphate. Catalyzes the conversion of glucosamine-6-phosphate to glucosamine-1-phosphate. The chain is Phosphoglucosamine mutase from Prochlorococcus marinus (strain SARG / CCMP1375 / SS120).